The sequence spans 430 residues: Enolase (430 aa).

Residue glutamine 164 participates in (2R)-2-phosphoglycerate binding. The active-site Proton donor is the glutamate 208. 3 residues coordinate Mg(2+): aspartate 245, glutamate 288, and aspartate 315. (2R)-2-phosphoglycerate-binding residues include lysine 340, arginine 369, serine 370, and lysine 391. The active-site Proton acceptor is lysine 340.

This sequence belongs to the enolase family. Mg(2+) is required as a cofactor.

It localises to the cytoplasm. Its subcellular location is the secreted. It is found in the cell surface. The enzyme catalyses (2R)-2-phosphoglycerate = phosphoenolpyruvate + H2O. It functions in the pathway carbohydrate degradation; glycolysis; pyruvate from D-glyceraldehyde 3-phosphate: step 4/5. Functionally, catalyzes the reversible conversion of 2-phosphoglycerate (2-PG) into phosphoenolpyruvate (PEP). It is essential for the degradation of carbohydrates via glycolysis. This chain is Enolase, found in Thermococcus gammatolerans (strain DSM 15229 / JCM 11827 / EJ3).